Consider the following 220-residue polypeptide: Large ribosomal subunit protein bL9 (220 aa).

The span at 167-184 (AAAEVEQAEDVAAAEQQD) shows a compositional bias: low complexity. Residues 167–220 (AAAEVEQAEDVAAAEQQDSSPVDDHADDADGATGGEGRDEGAGDASDGEEMPST) form a disordered region.

The protein belongs to the bacterial ribosomal protein bL9 family.

Binds to the 23S rRNA. This Anaplasma marginale (strain St. Maries) protein is Large ribosomal subunit protein bL9.